The primary structure comprises 615 residues: Hypermethylated in cancer 2 protein (615 aa).

One can recognise a BTB domain in the interval 46–109 (CDVIIMVENS…IYTGKLLPSD (64 aa)). Residues 144-167 (KPFGSGRAGSTGMGRPPRSQRLST) form a disordered region. A phosphoserine mark is found at Ser-166, Ser-169, and Ser-197. Disordered stretches follow at residues 182–208 (RKGA…GSNQ) and 229–421 (GCSS…SGHA). The segment at 246–250 (GLDLS) is binding to CtBP. Positions 280 to 296 (SPPAASAPPVANSASYS) are enriched in low complexity. Positions 336 to 356 (KKEWGKKEPVAGSPFERREAG) are enriched in basic and acidic residues. Ser-348 is subject to Phosphoserine. A compositionally biased stretch (low complexity) spans 379 to 388 (ASGAGPSGPY). Residue Ser-412 is modified to Phosphoserine. 5 C2H2-type zinc fingers span residues 442-469 (YVCI…EEEL), 505-532 (FKCS…LTRP), 533-560 (FPCN…GLKP), 561-588 (FACD…GEKP), and 589-615 (YECQ…TSPS).

Belongs to the krueppel C2H2-type zinc-finger protein family. Hic subfamily. In terms of assembly, self-associates. Interacts with HIC1. In terms of tissue distribution, highest levels in cerebellum.

It localises to the nucleus. Functionally, transcriptional repressor. In Homo sapiens (Human), this protein is Hypermethylated in cancer 2 protein (HIC2).